Consider the following 357-residue polypeptide: UPF0283 membrane protein BCAN_A1047 (357 aa).

Positions 1–36 (MSDKTPRKPTAFRLEQPARVSAASEQEEPRRPRAVK) are disordered. The segment covering 27 to 36 (EEPRRPRAVK) has biased composition (basic and acidic residues). 2 helical membrane-spanning segments follow: residues 78–98 (ILFG…TEDL) and 109–129 (LGWT…AIIL).

The protein belongs to the UPF0283 family.

Its subcellular location is the cell inner membrane. The chain is UPF0283 membrane protein BCAN_A1047 from Brucella canis (strain ATCC 23365 / NCTC 10854 / RM-666).